Reading from the N-terminus, the 443-residue chain is ATP-dependent protease ATPase subunit HslU (443 aa).

ATP is bound by residues I18 and 60 to 65; that span reads GVGKTE. Residues 139–161 form a disordered region; the sequence is ARDSGFDANPSEENNATRQKFRK. Positions 256, 321, and 393 each coordinate ATP.

This sequence belongs to the ClpX chaperone family. HslU subfamily. In terms of assembly, a double ring-shaped homohexamer of HslV is capped on each side by a ring-shaped HslU homohexamer. The assembly of the HslU/HslV complex is dependent on binding of ATP.

The protein resides in the cytoplasm. In terms of biological role, ATPase subunit of a proteasome-like degradation complex; this subunit has chaperone activity. The binding of ATP and its subsequent hydrolysis by HslU are essential for unfolding of protein substrates subsequently hydrolyzed by HslV. HslU recognizes the N-terminal part of its protein substrates and unfolds these before they are guided to HslV for hydrolysis. The protein is ATP-dependent protease ATPase subunit HslU of Nitrosomonas eutropha (strain DSM 101675 / C91 / Nm57).